We begin with the raw amino-acid sequence, 272 residues long: Tryptophan synthase alpha chain (272 aa).

Catalysis depends on proton acceptor residues E49 and E60.

This sequence belongs to the TrpA family. Tetramer of two alpha and two beta chains.

It carries out the reaction (1S,2R)-1-C-(indol-3-yl)glycerol 3-phosphate + L-serine = D-glyceraldehyde 3-phosphate + L-tryptophan + H2O. It participates in amino-acid biosynthesis; L-tryptophan biosynthesis; L-tryptophan from chorismate: step 5/5. The alpha subunit is responsible for the aldol cleavage of indoleglycerol phosphate to indole and glyceraldehyde 3-phosphate. The chain is Tryptophan synthase alpha chain from Legionella pneumophila (strain Corby).